The chain runs to 498 residues: Membrane-bound lytic murein transglycosylase F (498 aa).

Residues 1–29 (MFFKPDFRPRCAKWLIATGLFLMLGACVE) form the signal peptide. The tract at residues 30 to 267 (KPTTLERVKE…RLKDRYYGHV (238 aa)) is non-LT domain. Positions 268 to 498 (DVLGYVGAYT…SSSSTDESPL (231 aa)) are LT domain. Glutamate 314 is a catalytic residue. Residues 464-498 (VADGNLHVPGVDKTQPPVPPASPVPSSSSTDESPL) are disordered.

The protein in the N-terminal section; belongs to the bacterial solute-binding protein 3 family. This sequence in the C-terminal section; belongs to the transglycosylase Slt family.

It is found in the cell outer membrane. The enzyme catalyses Exolytic cleavage of the (1-&gt;4)-beta-glycosidic linkage between N-acetylmuramic acid (MurNAc) and N-acetylglucosamine (GlcNAc) residues in peptidoglycan, from either the reducing or the non-reducing ends of the peptidoglycan chains, with concomitant formation of a 1,6-anhydrobond in the MurNAc residue.. Functionally, murein-degrading enzyme that degrades murein glycan strands and insoluble, high-molecular weight murein sacculi, with the concomitant formation of a 1,6-anhydromuramoyl product. Lytic transglycosylases (LTs) play an integral role in the metabolism of the peptidoglycan (PG) sacculus. Their lytic action creates space within the PG sacculus to allow for its expansion as well as for the insertion of various structures such as secretion systems and flagella. This Pseudomonas syringae pv. syringae (strain B728a) protein is Membrane-bound lytic murein transglycosylase F.